An 861-amino-acid chain; its full sequence is Benzylsuccinate synthase alpha subunit (861 aa).

One can recognise a PFL domain in the interval 40-712 (TERTRRLKAR…QAVGLYMEVG (673 aa)). Positions 718 to 744 (TPDGRFGGEAADDGGISPYSGTDKKGP) are disordered. One can recognise a Glycine radical domain in the interval 731–850 (GGISPYSGTD…IIARNEQNFN (120 aa)). Gly-825 carries the post-translational modification Glycine radical.

It belongs to the glycyl radical enzyme (GRE) family. BSS subfamily. In terms of assembly, heterohexamer composed of 2 alpha subunits, 2 beta subunits and 2 gamma subunits.

The enzyme catalyses toluene + fumarate = 2-benzylsuccinate. It participates in xenobiotic degradation; toluene degradation. Its activity is regulated as follows. Activated by the benzylsuccinate synthase activating enzyme BssD. Rapidly inactivated by oxygen. Its function is as follows. Catalyzes the addition of fumarate to the methyl group of toluene, leading to the formation of benzylsuccinate. This is Benzylsuccinate synthase alpha subunit (bssA) from Thauera aromatica.